The sequence spans 227 residues: UPF0173 metal-dependent hydrolase DR_0006 (227 aa).

It belongs to the UPF0173 family.

The sequence is that of UPF0173 metal-dependent hydrolase DR_0006 from Deinococcus radiodurans (strain ATCC 13939 / DSM 20539 / JCM 16871 / CCUG 27074 / LMG 4051 / NBRC 15346 / NCIMB 9279 / VKM B-1422 / R1).